The primary structure comprises 536 residues: Bifunctional purine biosynthesis protein PurH (536 aa).

An MGS-like domain is found at 8-158 (IPAPDEVRIK…KNHAYVTIVT (151 aa)).

Belongs to the PurH family.

The enzyme catalyses (6R)-10-formyltetrahydrofolate + 5-amino-1-(5-phospho-beta-D-ribosyl)imidazole-4-carboxamide = 5-formamido-1-(5-phospho-D-ribosyl)imidazole-4-carboxamide + (6S)-5,6,7,8-tetrahydrofolate. It catalyses the reaction IMP + H2O = 5-formamido-1-(5-phospho-D-ribosyl)imidazole-4-carboxamide. It participates in purine metabolism; IMP biosynthesis via de novo pathway; 5-formamido-1-(5-phospho-D-ribosyl)imidazole-4-carboxamide from 5-amino-1-(5-phospho-D-ribosyl)imidazole-4-carboxamide (10-formyl THF route): step 1/1. Its pathway is purine metabolism; IMP biosynthesis via de novo pathway; IMP from 5-formamido-1-(5-phospho-D-ribosyl)imidazole-4-carboxamide: step 1/1. The polypeptide is Bifunctional purine biosynthesis protein PurH (Rhizobium meliloti (strain 1021) (Ensifer meliloti)).